The chain runs to 130 residues: Fluoride-specific ion channel FluC (130 aa).

The next 4 helical transmembrane spans lie at 2 to 22 (GLLLILVGIGGGLGAMSRFAL), 35 to 55 (IGILLCNIIGSLIIGMMAAFL), 72 to 92 (LFVTGFLGGFTTFSSFSLDIL), and 107 to 127 (ILVSVIVSLIAVILGFYFIMG). Positions 79 and 82 each coordinate Na(+).

Belongs to the fluoride channel Fluc/FEX (TC 1.A.43) family.

The protein resides in the cell inner membrane. The catalysed reaction is fluoride(in) = fluoride(out). Its activity is regulated as follows. Na(+) is not transported, but it plays an essential structural role and its presence is essential for fluoride channel function. Fluoride-specific ion channel. Important for reducing fluoride concentration in the cell, thus reducing its toxicity. The protein is Fluoride-specific ion channel FluC of Francisella philomiragia subsp. philomiragia (strain ATCC 25017 / CCUG 19701 / FSC 153 / O#319-036).